The sequence spans 324 residues: Beta-ketoacyl-[acyl-carrier-protein] synthase III (324 aa).

Active-site residues include Cys-112 and His-249. Residues Gln-250–Arg-254 form an ACP-binding region. Asn-279 is an active-site residue.

Belongs to the thiolase-like superfamily. FabH family. Homodimer.

The protein localises to the cytoplasm. It catalyses the reaction malonyl-[ACP] + acetyl-CoA + H(+) = 3-oxobutanoyl-[ACP] + CO2 + CoA. It participates in lipid metabolism; fatty acid biosynthesis. In terms of biological role, catalyzes the condensation reaction of fatty acid synthesis by the addition to an acyl acceptor of two carbons from malonyl-ACP. Catalyzes the first condensation reaction which initiates fatty acid synthesis and may therefore play a role in governing the total rate of fatty acid production. Possesses both acetoacetyl-ACP synthase and acetyl transacylase activities. Its substrate specificity determines the biosynthesis of branched-chain and/or straight-chain of fatty acids. This is Beta-ketoacyl-[acyl-carrier-protein] synthase III from Streptococcus sanguinis (strain SK36).